A 169-amino-acid polypeptide reads, in one-letter code: Large ribosomal subunit protein uL5 (169 aa).

Belongs to the universal ribosomal protein uL5 family. Part of the 50S ribosomal subunit; contacts the 5S rRNA and probably tRNA. Forms a bridge to the 30S subunit in the 70S ribosome.

Functionally, this is one of the proteins that bind and probably mediate the attachment of the 5S RNA into the large ribosomal subunit, where it forms part of the central protuberance. In the 70S ribosome it contacts protein S13 of the 30S subunit (bridge B1b), connecting the 2 subunits; this bridge is implicated in subunit movement. May contact the P site tRNA; the 5S rRNA and some of its associated proteins might help stabilize positioning of ribosome-bound tRNAs. This Methanosarcina mazei (strain ATCC BAA-159 / DSM 3647 / Goe1 / Go1 / JCM 11833 / OCM 88) (Methanosarcina frisia) protein is Large ribosomal subunit protein uL5.